We begin with the raw amino-acid sequence, 389 residues long: Nucleic acid dioxygenase ALKBH1 (389 aa).

Positions 1 to 127 (MGKMAAAVAS…CLKLYSQKPN (127 aa)) are interaction with DNAJB6. Residues 86-389 (SKWRAYGLEG…VKRKRLNPNS (304 aa)) are tRNA-binding. Residues tryptophan 144 and 175–177 (YHY) contribute to the substrate site. One can recognise a Fe2OG dioxygenase domain in the interval 213–347 (QAEAGILNYY…RVNMTVRQVL (135 aa)). Residue 220–222 (NYY) coordinates 2-oxoglutarate. Histidine 231, aspartate 233, and histidine 287 together coordinate Fe cation. Aspartate 233 contacts substrate. Position 338–344 (338–344 (RVNMTVR)) interacts with 2-oxoglutarate.

Monomer. Interacts with DNAJB6. Fe(2+) is required as a cofactor. In adult organs, highly expressed in testis, eye, brain and kidney.

Its subcellular location is the nucleus. The enzyme catalyses an N(6)-methyl-2'-deoxyadenosine in DNA + 2-oxoglutarate + O2 = a 2'-deoxyadenosine in DNA + formaldehyde + succinate + CO2. It carries out the reaction 2'-deoxyribonucleotide-(2'-deoxyribose 5'-phosphate)-2'-deoxyribonucleotide-DNA = a 3'-end 2'-deoxyribonucleotide-(2,3-dehydro-2,3-deoxyribose 5'-phosphate)-DNA + a 5'-end 5'-phospho-2'-deoxyribonucleoside-DNA + H(+). The catalysed reaction is a methylated nucleobase within DNA + 2-oxoglutarate + O2 = a nucleobase within DNA + formaldehyde + succinate + CO2. It catalyses the reaction an N(1)-methyladenosine in tRNA + 2-oxoglutarate + O2 = an adenosine in tRNA + formaldehyde + succinate + CO2. The enzyme catalyses 5-methylcytidine(34) in mitochondrial tRNA(Met) + 2 2-oxoglutarate + 2 O2 = 5-formylcytidine(34) in mitochondrial tRNA(Met) + 2 succinate + 2 CO2 + H2O. It carries out the reaction an N(3)-methylcytidine in mRNA + 2-oxoglutarate + O2 = a cytidine in mRNA + formaldehyde + succinate + CO2. The catalysed reaction is N(1)-methyladenosine(58) in tRNA + 2-oxoglutarate + O2 = adenosine(58) in tRNA + formaldehyde + succinate + CO2. Its function is as follows. Dioxygenase that acts on nucleic acids, such as DNA and tRNA. Requires molecular oxygen, alpha-ketoglutarate and iron. A number of activities have been described for this dioxygenase, but recent results suggest that it mainly acts on tRNAs and mediates their demethylation or oxidation depending on the context and subcellular compartment. Mainly acts as a tRNA demethylase by removing N(1)-methyladenine from various tRNAs, with a preference for N(1)-methyladenine at position 58 (m1A58) present on a stem loop structure of tRNAs. Acts as a regulator of translation initiation and elongation in response to glucose deprivation: regulates both translation initiation, by mediating demethylation of tRNA(Met), and translation elongation, N(1)-methyladenine-containing tRNAs being preferentially recruited to polysomes to promote translation elongation. In mitochondrion, specifically interacts with mt-tRNA(Met) and mediates oxidation of mt-tRNA(Met) methylated at cytosine(34) to form 5-formylcytosine (f(5)c) at this position. mt-tRNA(Met) containing the f(5)c modification at the wobble position enables recognition of the AUA codon in addition to the AUG codon, expanding codon recognition in mitochondrial translation. Specifically demethylates DNA methylated on the 6th position of adenine (N(6)-methyladenosine) DNA. N(6)-methyladenosine (m6A) DNA is present at some L1 elements in embryonic stem cells and probably promotes their silencing. Demethylates mRNAs containing N(3)-methylcytidine modification. Also able to repair alkylated single-stranded DNA by oxidative demethylation, but with low activity. Also has DNA lyase activity and introduces double-stranded breaks at abasic sites: cleaves both single-stranded DNA and double-stranded DNA at abasic sites, with the greatest activity towards double-stranded DNA with two abasic sites. DNA lyase activity does not require alpha-ketoglutarate and iron and leads to the formation of an irreversible covalent protein-DNA adduct with the 5' DNA product. DNA lyase activity is not required during base excision repair and class switch recombination of the immunoglobulin heavy chain during B lymphocyte activation. May play a role in placental trophoblast lineage differentiation. The polypeptide is Nucleic acid dioxygenase ALKBH1 (Mus musculus (Mouse)).